We begin with the raw amino-acid sequence, 296 residues long: Putative methyltransferase HI_1523 (296 aa).

This sequence belongs to the N(4)/N(6)-methyltransferase family.

The chain is Putative methyltransferase HI_1523 from Haemophilus influenzae (strain ATCC 51907 / DSM 11121 / KW20 / Rd).